A 180-amino-acid chain; its full sequence is Large ribosomal subunit protein uL5 (180 aa).

It belongs to the universal ribosomal protein uL5 family. Part of the 50S ribosomal subunit; part of the 5S rRNA/L5/L18/L25 subcomplex. Contacts the 5S rRNA and the P site tRNA. Forms a bridge to the 30S subunit in the 70S ribosome.

Functionally, this is one of the proteins that bind and probably mediate the attachment of the 5S RNA into the large ribosomal subunit, where it forms part of the central protuberance. In the 70S ribosome it contacts protein S13 of the 30S subunit (bridge B1b), connecting the 2 subunits; this bridge is implicated in subunit movement. Contacts the P site tRNA; the 5S rRNA and some of its associated proteins might help stabilize positioning of ribosome-bound tRNAs. This chain is Large ribosomal subunit protein uL5, found in Lacticaseibacillus casei (strain BL23) (Lactobacillus casei).